The primary structure comprises 236 residues: Protein CUSTOS (236 aa).

Disordered regions lie at residues 1–57 (MSES…GTTP) and 83–236 (VEPA…KKDE). 2 stretches are compositionally biased toward basic and acidic residues: residues 10–51 (NTAR…HDGN) and 156–165 (EKTEEKSTKE). The Nucleolar localization signal (NLS1) motif lies at 173-181 (KMKKKKKRK). Over residues 182-196 (TSSEESQDKVNHQTE) the composition is skewed to basic and acidic residues. The segment covering 197 to 210 (KQSNVEGNQEQTTA) has biased composition (polar residues). The Nucleolar localization signal (NLS2) signature appears at 211–219 (GERLKKKKK). The segment covering 214 to 227 (LKKKKKKKKKKRKK) has biased composition (basic residues).

It belongs to the CUSTOS family. Interacts (via NLS1 and NLS2) with dvl2; the interaction is negatively regulated by Wnt stimulation. Interacts with csnk1a1. Interacts with ctnnb1; the interaction is positively regulated by Wnt stimulation. Post-translationally, phosphorylated by ck1/csnk1a1.

The protein localises to the nucleus envelope. Its function is as follows. Essential for Spemann-Mangold organizer formation and subsequent anterior head development in the embryo. Inhibits canonical Wnt signaling pathway by antagonizing nuclear import of beta-catenin (ctnnb1) during embryogenesis. The chain is Protein CUSTOS from Danio rerio (Zebrafish).